A 352-amino-acid chain; its full sequence is 2'-dehydrokanamycin reductase (352 aa).

It belongs to the NAD(P)-dependent epimerase/dehydratase family.

The enzyme catalyses 2'-dehydrokanamycin A + NADPH + H(+) = kanamycin A + NADP(+). Its pathway is antibiotic biosynthesis; kanamycin biosynthesis. Functionally, mediates the conversion of 2'-dehydrokanamycin A into kanamycin A. The protein is 2'-dehydrokanamycin reductase (kanK) of Streptomyces kanamyceticus.